Here is an 828-residue protein sequence, read N- to C-terminus: Periplasmic nitrate reductase (828 aa).

The segment at residues 1–31 is a signal peptide (tat-type signal); it reads MKLSRRSFMKANAVAAAAAAAGLSVPGVARA. The 4Fe-4S Mo/W bis-MGD-type domain occupies 39 to 95; that stretch reads IKWDKAPCRFCGTGCGVLVGTQQGRVVACQGDPDAPVNRGLNCIKGYFLPKIMYGKD. [4Fe-4S] cluster-binding residues include Cys46, Cys49, Cys53, and Cys81. Mo-bis(molybdopterin guanine dinucleotide) contacts are provided by residues Lys83, Gln150, Asn175, Cys179, 212 to 219, 243 to 247, 262 to 264, Met372, Gln376, Asn482, 508 to 509, Lys531, Asp558, and 718 to 727; these read WGANMAEM, STYQH, QSD, SD, and TGRVLEHWHT. Phe794 is a substrate binding site. Asn802 and Lys819 together coordinate Mo-bis(molybdopterin guanine dinucleotide).

Belongs to the prokaryotic molybdopterin-containing oxidoreductase family. NasA/NapA/NarB subfamily. In terms of assembly, component of the periplasmic nitrate reductase NapAB complex composed of NapA and NapB. Requires [4Fe-4S] cluster as cofactor. Mo-bis(molybdopterin guanine dinucleotide) serves as cofactor. Post-translationally, predicted to be exported by the Tat system. The position of the signal peptide cleavage has not been experimentally proven.

The protein resides in the periplasm. The enzyme catalyses 2 Fe(II)-[cytochrome] + nitrate + 2 H(+) = 2 Fe(III)-[cytochrome] + nitrite + H2O. Catalytic subunit of the periplasmic nitrate reductase complex NapAB. Receives electrons from NapB and catalyzes the reduction of nitrate to nitrite. The chain is Periplasmic nitrate reductase from Escherichia coli O9:H4 (strain HS).